Consider the following 257-residue polypeptide: Thiazole synthase (257 aa).

Lysine 96 functions as the Schiff-base intermediate with DXP in the catalytic mechanism. 1-deoxy-D-xylulose 5-phosphate-binding positions include glycine 157, 184–185, and 206–207; these read AG and NT.

The protein belongs to the ThiG family. Homotetramer. Forms heterodimers with either ThiH or ThiS.

The protein localises to the cytoplasm. The catalysed reaction is [ThiS sulfur-carrier protein]-C-terminal-Gly-aminoethanethioate + 2-iminoacetate + 1-deoxy-D-xylulose 5-phosphate = [ThiS sulfur-carrier protein]-C-terminal Gly-Gly + 2-[(2R,5Z)-2-carboxy-4-methylthiazol-5(2H)-ylidene]ethyl phosphate + 2 H2O + H(+). It participates in cofactor biosynthesis; thiamine diphosphate biosynthesis. Catalyzes the rearrangement of 1-deoxy-D-xylulose 5-phosphate (DXP) to produce the thiazole phosphate moiety of thiamine. Sulfur is provided by the thiocarboxylate moiety of the carrier protein ThiS. In vitro, sulfur can be provided by H(2)S. This is Thiazole synthase from Bartonella henselae (strain ATCC 49882 / DSM 28221 / CCUG 30454 / Houston 1) (Rochalimaea henselae).